The primary structure comprises 223 residues: Dephospho-CoA kinase (223 aa).

Residues 3-204 form the DPCK domain; that stretch reads VFGLSGGAGS…AGRHRFRVAR (202 aa). Residue 11 to 16 coordinates ATP; that stretch reads GSGKST.

This sequence belongs to the CoaE family.

It is found in the cytoplasm. It carries out the reaction 3'-dephospho-CoA + ATP = ADP + CoA + H(+). The protein operates within cofactor biosynthesis; coenzyme A biosynthesis; CoA from (R)-pantothenate: step 5/5. Functionally, catalyzes the phosphorylation of the 3'-hydroxyl group of dephosphocoenzyme A to form coenzyme A. In Anaplasma marginale (strain St. Maries), this protein is Dephospho-CoA kinase.